A 264-amino-acid polypeptide reads, in one-letter code: MTDLTTIFKNHKAFIAFVVAGDPNFEATVDQVVALAEAGCDLVEIGIPFSDPVADGPEIQAADLRAFDQHITPQRVFELVVAIREKTTIPLVFLTYANIVYQFGYAAFAQQCQSLNVAGLIIPDMPLEASGELRPTLDHYGIALIPLIAPTSDDARIAAIAQQARGFIYVVSSLGVTGTRRHITTDLATLVAKIRHATTLPVAIGFGIHEPAQAQAMAQIADGVIVGSAVVHLIATHQPATAVLRDYTRRMRRALDGRTADTVD.

Catalysis depends on proton acceptor residues Glu44 and Asp55.

This sequence belongs to the TrpA family. As to quaternary structure, tetramer of two alpha and two beta chains.

The enzyme catalyses (1S,2R)-1-C-(indol-3-yl)glycerol 3-phosphate + L-serine = D-glyceraldehyde 3-phosphate + L-tryptophan + H2O. It functions in the pathway amino-acid biosynthesis; L-tryptophan biosynthesis; L-tryptophan from chorismate: step 5/5. Functionally, the alpha subunit is responsible for the aldol cleavage of indoleglycerol phosphate to indole and glyceraldehyde 3-phosphate. The protein is Tryptophan synthase alpha chain of Lactiplantibacillus plantarum (strain ATCC BAA-793 / NCIMB 8826 / WCFS1) (Lactobacillus plantarum).